The primary structure comprises 146 residues: Hemoglobin subunit beta (146 aa).

A Globin domain is found at 2–146; it reads HWTAEEKQLI…VAHALARKYH (145 aa). Residues His-63 and His-92 each coordinate heme b.

Belongs to the globin family. Heterotetramer of two alpha chains and two beta chains. Red blood cells.

Its function is as follows. Involved in oxygen transport from the lung to the various peripheral tissues. This is Hemoglobin subunit beta (HBB) from Chloephaga melanoptera (Andean goose).